The sequence spans 423 residues: Glutamate-1-semialdehyde 2,1-aminomutase (423 aa).

At K262 the chain carries N6-(pyridoxal phosphate)lysine.

This sequence belongs to the class-III pyridoxal-phosphate-dependent aminotransferase family. HemL subfamily. Pyridoxal 5'-phosphate serves as cofactor.

It is found in the cytoplasm. It catalyses the reaction (S)-4-amino-5-oxopentanoate = 5-aminolevulinate. The protein operates within porphyrin-containing compound metabolism; protoporphyrin-IX biosynthesis; 5-aminolevulinate from L-glutamyl-tRNA(Glu): step 2/2. In Methanosphaera stadtmanae (strain ATCC 43021 / DSM 3091 / JCM 11832 / MCB-3), this protein is Glutamate-1-semialdehyde 2,1-aminomutase.